The primary structure comprises 611 residues: ANK repeat-containing protein nipk-1 (611 aa).

The stretch at Asn91–Leu149 forms a coiled coil. Disordered stretches follow at residues Ser92–Tyr167, Ile212–Arg255, and Thr280–Arg333. Positions Lys97–Glu131 are enriched in basic and acidic residues. Polar residues-rich tracts occupy residues Ile212–Ser223, Glu239–Arg255, and Gly315–Arg333. ANK repeat units lie at residues Asp375–Glu405, Phe417–Ser446, Val452–Glu482, Asp486–Ile527, and Thr532–Phe561.

Belongs to the iASPP family. As to expression, expressed in the nervous system.

Its function is as follows. Acts downstream of the receptor complex composed of ilcr-1 and ilcr-2, which is a signaling complex that modulates neuronal activity and animal behavior in response to sensory neuron input. Mediates signaling of the complex. This chain is ANK repeat-containing protein nipk-1, found in Caenorhabditis elegans.